A 245-amino-acid chain; its full sequence is MSQSKFALPRNGFTFKQFFVAHDRCAMKVGTDGILLGAWAPIAGVKHVLDIGAGSGLLALMLAQRTDHDVQVDAVELDEEAAAQARENALASPWSSRIEVCQADIHQWQPSQTRRYELIISNPPFFAEGVPCATSQREQARYTTTLDHASLLTCAAEHITEEGFFCVVLPVDIGNAFIERATAMGWHLRLRTDVAETELRPPHRVLLAFSPTAGECFCDRLAIRGPEQQYSEGFTALTGDFYLFM.

The protein belongs to the methyltransferase superfamily. tRNA (adenine-N(6)-)-methyltransferase family.

It is found in the cytoplasm. The catalysed reaction is adenosine(37) in tRNA1(Val) + S-adenosyl-L-methionine = N(6)-methyladenosine(37) in tRNA1(Val) + S-adenosyl-L-homocysteine + H(+). Functionally, specifically methylates the adenine in position 37 of tRNA(1)(Val) (anticodon cmo5UAC). The protein is tRNA1(Val) (adenine(37)-N6)-methyltransferase of Klebsiella pneumoniae (strain 342).